Reading from the N-terminus, the 273-residue chain is Anthranilate synthase beta subunit 2, chloroplastic (273 aa).

The transit peptide at 1-36 (MAATTLYNSCLLQPKYGFTTRRLNQSLVNSLTNPTR) directs the protein to the chloroplast. The region spanning 71–270 (PIIVIDNYDS…IKLVEKKESE (200 aa)) is the Glutamine amidotransferase type-1 domain. Catalysis depends on C149, which acts as the Nucleophile. Active-site residues include H244 and E246.

As to quaternary structure, heterotetramer consisting of two non-identical subunits: a beta subunit and a large alpha subunit.

The protein localises to the plastid. It is found in the chloroplast. The enzyme catalyses chorismate + L-glutamine = anthranilate + pyruvate + L-glutamate + H(+). The protein operates within amino-acid biosynthesis; L-tryptophan biosynthesis; L-tryptophan from chorismate: step 1/5. Its activity is regulated as follows. Feedback inhibition by tryptophan. In terms of biological role, part of a heterotetrameric complex that catalyzes the two-step biosynthesis of anthranilate, an intermediate in the biosynthesis of L-tryptophan. In the first step, the glutamine-binding beta subunit of anthranilate synthase (AS) provides the glutamine amidotransferase activity which generates ammonia as a substrate that, along with chorismate, is used in the second step, catalyzed by the large alpha subunit of AS to produce anthranilate. The sequence is that of Anthranilate synthase beta subunit 2, chloroplastic (ASB2) from Arabidopsis thaliana (Mouse-ear cress).